Here is a 177-residue protein sequence, read N- to C-terminus: NADH-quinone oxidoreductase subunit B (177 aa).

Residues Cys-56, Cys-57, Cys-121, and Cys-151 each coordinate [4Fe-4S] cluster.

It belongs to the complex I 20 kDa subunit family. In terms of assembly, NDH-1 is composed of 14 different subunits. Subunits NuoB, C, D, E, F, and G constitute the peripheral sector of the complex. Requires [4Fe-4S] cluster as cofactor.

The protein localises to the cell inner membrane. The enzyme catalyses a quinone + NADH + 5 H(+)(in) = a quinol + NAD(+) + 4 H(+)(out). In terms of biological role, NDH-1 shuttles electrons from NADH, via FMN and iron-sulfur (Fe-S) centers, to quinones in the respiratory chain. Couples the redox reaction to proton translocation (for every two electrons transferred, four hydrogen ions are translocated across the cytoplasmic membrane), and thus conserves the redox energy in a proton gradient. In Sphingopyxis alaskensis (strain DSM 13593 / LMG 18877 / RB2256) (Sphingomonas alaskensis), this protein is NADH-quinone oxidoreductase subunit B.